Here is a 123-residue protein sequence, read N- to C-terminus: Small ribosomal subunit protein uS12 (123 aa).

Aspartate 89 carries the post-translational modification 3-methylthioaspartic acid.

It belongs to the universal ribosomal protein uS12 family. Part of the 30S ribosomal subunit. Contacts proteins S8 and S17. May interact with IF1 in the 30S initiation complex.

Its function is as follows. With S4 and S5 plays an important role in translational accuracy. Interacts with and stabilizes bases of the 16S rRNA that are involved in tRNA selection in the A site and with the mRNA backbone. Located at the interface of the 30S and 50S subunits, it traverses the body of the 30S subunit contacting proteins on the other side and probably holding the rRNA structure together. The combined cluster of proteins S8, S12 and S17 appears to hold together the shoulder and platform of the 30S subunit. In Trichlorobacter lovleyi (strain ATCC BAA-1151 / DSM 17278 / SZ) (Geobacter lovleyi), this protein is Small ribosomal subunit protein uS12.